The chain runs to 478 residues: Protein trichome birefringence-like 20 (478 aa).

A helical; Signal-anchor for type II membrane protein membrane pass occupies residues Ile10 to Phe30. The segment covering Ser50–Ser68 has biased composition (low complexity). A disordered region spans residues Ser50–Arg125. Polar residues predominate over residues Ser92–His110. Positions Val112–Arg125 are enriched in basic residues. The GDS motif signature appears at Gly200–Ser202. The short motif at Asp447–Asn461 is the DCXHWCLPGXXDXWN motif element.

This sequence belongs to the PC-esterase family. TBL subfamily.

It localises to the membrane. Its function is as follows. May act as a bridging protein that binds pectin and other cell wall polysaccharides. Probably involved in maintaining esterification of pectins. May be involved in the specific O-acetylation of cell wall polymers. This chain is Protein trichome birefringence-like 20 (TBL20), found in Arabidopsis thaliana (Mouse-ear cress).